The sequence spans 766 residues: 5-methyltetrahydropteroyltriglutamate--homocysteine methyltransferase (766 aa).

5-methyltetrahydropteroyltri-L-glutamate is bound by residues 16–19 (RELK) and Lys-119. Residues 440–442 (IGS) and Glu-493 contribute to the L-homocysteine site. Residues 440–442 (IGS) and Glu-493 each bind L-methionine. Residues 524 to 525 (RC) and Trp-570 each bind 5-methyltetrahydropteroyltri-L-glutamate. Asp-608 lines the L-homocysteine pocket. An L-methionine-binding site is contributed by Asp-608. Glu-614 is a 5-methyltetrahydropteroyltri-L-glutamate binding site. 3 residues coordinate Zn(2+): His-650, Cys-652, and Glu-674. The active-site Proton donor is His-703. A Zn(2+)-binding site is contributed by Cys-735.

Belongs to the vitamin-B12 independent methionine synthase family. The cofactor is Zn(2+).

The catalysed reaction is 5-methyltetrahydropteroyltri-L-glutamate + L-homocysteine = tetrahydropteroyltri-L-glutamate + L-methionine. It functions in the pathway amino-acid biosynthesis; L-methionine biosynthesis via de novo pathway; L-methionine from L-homocysteine (MetE route): step 1/1. Catalyzes the transfer of a methyl group from 5-methyltetrahydrofolate to homocysteine resulting in methionine formation. The polypeptide is 5-methyltetrahydropteroyltriglutamate--homocysteine methyltransferase (Pseudomonas aeruginosa (strain LESB58)).